A 338-amino-acid polypeptide reads, in one-letter code: Ketol-acid reductoisomerase (NADP(+)) (338 aa).

The region spanning 1-181 (MNVYYDKDCD…GGGRSGIIET (181 aa)) is the KARI N-terminal Rossmann domain. Residues 24-27 (YGSQ), Arg47, Ser50, Ser52, and 82-85 (DEFQ) contribute to the NADP(+) site. His107 is an active-site residue. An NADP(+)-binding site is contributed by Gly133. The KARI C-terminal knotted domain maps to 182-327 (TFKDETETDL…AKLRGMMPWI (146 aa)). Mg(2+)-binding residues include Asp190, Glu194, Glu226, and Glu230. Ser251 serves as a coordination point for substrate.

It belongs to the ketol-acid reductoisomerase family. The cofactor is Mg(2+).

It carries out the reaction (2R)-2,3-dihydroxy-3-methylbutanoate + NADP(+) = (2S)-2-acetolactate + NADPH + H(+). It catalyses the reaction (2R,3R)-2,3-dihydroxy-3-methylpentanoate + NADP(+) = (S)-2-ethyl-2-hydroxy-3-oxobutanoate + NADPH + H(+). The protein operates within amino-acid biosynthesis; L-isoleucine biosynthesis; L-isoleucine from 2-oxobutanoate: step 2/4. It participates in amino-acid biosynthesis; L-valine biosynthesis; L-valine from pyruvate: step 2/4. Involved in the biosynthesis of branched-chain amino acids (BCAA). Catalyzes an alkyl-migration followed by a ketol-acid reduction of (S)-2-acetolactate (S2AL) to yield (R)-2,3-dihydroxy-isovalerate. In the isomerase reaction, S2AL is rearranged via a Mg-dependent methyl migration to produce 3-hydroxy-3-methyl-2-ketobutyrate (HMKB). In the reductase reaction, this 2-ketoacid undergoes a metal-dependent reduction by NADPH to yield (R)-2,3-dihydroxy-isovalerate. The sequence is that of Ketol-acid reductoisomerase (NADP(+)) from Psychrobacter arcticus (strain DSM 17307 / VKM B-2377 / 273-4).